A 182-amino-acid chain; its full sequence is Thioredoxin F-type, chloroplastic (182 aa).

The transit peptide at Met1–Gly69 directs the protein to the chloroplast. The region spanning Pro70–Ser181 is the Thioredoxin domain. Active-site nucleophile residues include Cys106 and Cys109. A disulfide bond links Cys106 and Cys109.

The protein belongs to the thioredoxin family. Plant F-type subfamily. Forms a complex with heterodimeric ferredoxin-thioredoxin reductase (FTR) and ferredoxin.

The protein resides in the plastid. Its subcellular location is the chloroplast. Functionally, participates in various redox reactions through the reversible oxidation of the active center dithiol to a disulfide. The F form is known to activate a number of enzymes of the photosynthetic carbon cycle. The polypeptide is Thioredoxin F-type, chloroplastic (Pisum sativum (Garden pea)).